The following is a 223-amino-acid chain: 2-C-methyl-D-erythritol 4-phosphate cytidylyltransferase (223 aa).

Belongs to the IspD/TarI cytidylyltransferase family. IspD subfamily.

The enzyme catalyses 2-C-methyl-D-erythritol 4-phosphate + CTP + H(+) = 4-CDP-2-C-methyl-D-erythritol + diphosphate. It participates in isoprenoid biosynthesis; isopentenyl diphosphate biosynthesis via DXP pathway; isopentenyl diphosphate from 1-deoxy-D-xylulose 5-phosphate: step 2/6. Functionally, catalyzes the formation of 4-diphosphocytidyl-2-C-methyl-D-erythritol from CTP and 2-C-methyl-D-erythritol 4-phosphate (MEP). The protein is 2-C-methyl-D-erythritol 4-phosphate cytidylyltransferase of Prochlorococcus marinus (strain AS9601).